The sequence spans 541 residues: Protein wntless homolog A (541 aa).

The N-terminal stretch at 1–28 is a signal peptide; the sequence is MAGAIIENMSTKKLCMVGVALLLLQVLA. At 29–232 the chain is on the lumenal side; the sequence is FLVGGLIAPK…SIFQNGGFTM (204 aa). A helical membrane pass occupies residues 233–253; it reads VWFAMKTFLTPSIIIIMIWYW. Residues 254–268 are Cytoplasmic-facing; the sequence is RRITMMTRSPVLLEK. The chain crosses the membrane as a helical span at residues 269–289; the sequence is VIFALGFSMTFINIPVEWFSI. Residues 290-303 are Lumenal-facing; that stretch reads GYDWTWMLLFGDIR. The helical transmembrane segment at 304-324 threads the bilayer; sequence QGIFYAMLLSFWIIFCGEHMM. The Cytoplasmic segment spans residues 325 to 331; the sequence is DQTERNR. The chain crosses the membrane as a helical span at residues 332–352; that stretch reads ISVYWKQVGPIAFGSCCLFIF. Over 353–379 the chain is Lumenal; it reads DMCERGVQLKNPFYSIWTTDVGAEIAM. A helical transmembrane segment spans residues 380 to 400; sequence AFIIVAGICACLYFLFLCFMV. Topologically, residues 401–431 are cytoplasmic; that stretch reads YQVFRNISGKQSNLPAMTKARRLHYEGLIFR. The chain crosses the membrane as a helical span at residues 432–452; it reads FKFLMIITLACAALTIVFFIT. The Lumenal portion of the chain corresponds to 453–471; sequence TQITEGNWKLGDLSIELNS. The chain crosses the membrane as a helical span at residues 472–492; that stretch reads AFFTGVYGMWNLYVFALMFLY. Residues 493–541 are Cytoplasmic-facing; it reads APSHKHYGDGQSNDGAGMSSGEELQLTTTITHIDGPTEVYRLAGKEAQE.

Belongs to the wntless family.

The protein localises to the golgi apparatus membrane. The protein resides in the cytoplasmic vesicle membrane. In terms of biological role, required for a subset of Wnt-dependent developmental processes, in particular, eye and pronephros development. Regulates the secretion of wnt4, which is required for eye development. The chain is Protein wntless homolog A (wls-a) from Xenopus laevis (African clawed frog).